Consider the following 263-residue polypeptide: Acyl-[acyl-carrier-protein]--UDP-N-acetylglucosamine O-acyltransferase (263 aa).

The protein belongs to the transferase hexapeptide repeat family. LpxA subfamily. In terms of assembly, homotrimer.

The protein localises to the cytoplasm. It catalyses the reaction a (3R)-hydroxyacyl-[ACP] + UDP-N-acetyl-alpha-D-glucosamine = a UDP-3-O-[(3R)-3-hydroxyacyl]-N-acetyl-alpha-D-glucosamine + holo-[ACP]. It participates in glycolipid biosynthesis; lipid IV(A) biosynthesis; lipid IV(A) from (3R)-3-hydroxytetradecanoyl-[acyl-carrier-protein] and UDP-N-acetyl-alpha-D-glucosamine: step 1/6. In terms of biological role, involved in the biosynthesis of lipid A, a phosphorylated glycolipid that anchors the lipopolysaccharide to the outer membrane of the cell. The chain is Acyl-[acyl-carrier-protein]--UDP-N-acetylglucosamine O-acyltransferase from Campylobacter jejuni subsp. doylei (strain ATCC BAA-1458 / RM4099 / 269.97).